The chain runs to 750 residues: uncharacterized protein (750 aa).

Helical transmembrane passes span 1–21 (MSII…SIVT), 465–485 (YGAN…ISYL), and 586–606 (GMFG…VAVS).

The protein localises to the membrane. This is an uncharacterized protein from Saccharomyces cerevisiae (strain ATCC 204508 / S288c) (Baker's yeast).